Reading from the N-terminus, the 106-residue chain is Ribosomal processing cysteine protease Prp (106 aa).

H22 acts as the Proton donor in catalysis. Catalysis depends on C34, which acts as the Nucleophile.

It belongs to the Prp family. As to quaternary structure, homodimer. A mutant protein unable to cleave bL27 copurifies with its substrate.

With respect to regulation, not inhibited by short peptide analogs; a 6-mer inhibits only 20% while a 13-mer inhibits 63%. Inhibited by Ac-KLNLQFF-CH(2) which binds covalantly to Cys-34. Inhibited by mersalyl acid (C13H18HgNO6). Functionally, an essential cysteine protease that cleaves the N-terminal 9 amino acids from ribosomal protein bL27. Also acts as an N-terminal protease on the major capsid and scaffold assembly proteins of bacteriophage 80alpha. Cleavage of the N-terminus of bL27 (and thus this enzyme) is essential for growth; it cannot be replaced by a 'pre-cleaved' or non-cleavable form of bL27. Might serve a chaperone function during ribosome assembly. The polypeptide is Ribosomal processing cysteine protease Prp (Staphylococcus aureus (strain NCTC 8325 / PS 47)).